We begin with the raw amino-acid sequence, 328 residues long: 3-dehydroquinate synthase (328 aa).

It belongs to the archaeal-type DHQ synthase family.

It carries out the reaction 2-amino-2,3,7-trideoxy-D-lyxo-hept-6-ulosonate + NAD(+) + H2O = 3-dehydroquinate + NH4(+) + NADH + H(+). Its function is as follows. Catalyzes the oxidative deamination and cyclization of 2-amino-3,7-dideoxy-D-threo-hept-6-ulosonic acid (ADH) to yield 3-dehydroquinate (DHQ), which is fed into the canonical shikimic pathway of aromatic amino acid biosynthesis. The chain is 3-dehydroquinate synthase from Methanosphaerula palustris (strain ATCC BAA-1556 / DSM 19958 / E1-9c).